A 488-amino-acid polypeptide reads, in one-letter code: Serine hydroxymethyltransferase, mitochondrial (488 aa).

The transit peptide at 1–20 (MAVLRQFVKNSYSSIPKRFY) directs the protein to the mitochondrion. Position 265 is an N6-(pyridoxal phosphate)lysine (K265).

This sequence belongs to the SHMT family. As to quaternary structure, homotetramer. Pyridoxal 5'-phosphate is required as a cofactor.

It localises to the mitochondrion. It carries out the reaction (6R)-5,10-methylene-5,6,7,8-tetrahydrofolate + glycine + H2O = (6S)-5,6,7,8-tetrahydrofolate + L-serine. It participates in one-carbon metabolism; tetrahydrofolate interconversion. Interconversion of serine and glycine. The polypeptide is Serine hydroxymethyltransferase, mitochondrial (shm2) (Schizosaccharomyces pombe (strain 972 / ATCC 24843) (Fission yeast)).